The chain runs to 2108 residues: Mucin-5B (2108 aa).

Residues 1–21 (MEIKKERSFWIFCLIWSFCKG) form the signal peptide. The VWFD 1 domain maps to 36-203 (SECTTWGNFH…KVEDPSEKCP (168 aa)). 2 disulfide bridges follow: C38–C166 and C60–C202. Positions 196-219 (EDPSEKCPDVRPDDHTGRHPTEDD) are disordered. Positions 304–360 (CPSNMEYMECGNSCADTCADPERSKICKAPCTDGCFCPPGTILDDLGGKKCVPRDSC) constitute a TIL 1 domain. N381 carries N-linked (GlcNAc...) (complex) asparagine glycosylation. One can recognise a VWFD 2 domain in the interval 398–570 (GSCSIDGGFH…NSWKTRASCF (173 aa)). Cystine bridges form between C400/C534, C422/C569, and C443/C451. N528, N599, N680, and N772 each carry an N-linked (GlcNAc...) (complex) asparagine glycan. Residues 666–723 (CPETMVYNYSVKYCNQSCRSLDEPDPLCKVQIAPMEGCGCPEGTYLNDEEECVTPDDC) form the TIL 2 domain. Residues 782 to 825 (GSECQKSCKTQDMHCYVTECVSGCMCPDGLVLDGSGGCIPKDQC) enclose the TIL 3 domain. Positions 825–897 (CPCVHGGHFY…DYILAQDFCP (73 aa)) constitute a VWFC 1 domain. N855 is a glycosylation site (N-linked (GlcNAc...) (complex) asparagine). A VWFD 3 domain is found at 863 to 1033 (GTCTVYGNGH…NSWKITSTCS (171 aa)). Cystine bridges form between C865-C997, C887-C1032, C896-C994, and C914-C921. 4 N-linked (GlcNAc...) (complex) asparagine glycosylation sites follow: N1036, N1219, N1371, and N1452. The 185-residue stretch at 1429-1613 (CICSGWGNEH…APVSTNRYCN (185 aa)) folds into the VWFD 4 domain. Intrachain disulfides connect C1431–C1573, C1453–C1612, and C1477–C1485. N1567, N1639, N1792, N1807, and N1841 each carry an N-linked (GlcNAc...) (complex) asparagine glycan. The region spanning 1761 to 1832 (CGCTAQDGSV…DPCCTETVCE (72 aa)) is the VWFC 2 domain. Positions 1870 to 1937 (GVCVSEGVEF…KEGQCCSQCQ (68 aa)) constitute a VWFC 3 domain. A glycan (N-linked (GlcNAc...) (complex) asparagine) is linked at N1964. Cystine bridges form between C2010-C2066, C2031-C2080, C2042-C2096, and C2046-C2098. In terms of domain architecture, CTCK spans 2010-2104 (CIDLPHKCKR…ECGCVETKCP (95 aa)).

In terms of assembly, homomultimer; disulfide-linked. The N- and C-terminus mediate their assembly into higher order structures to form filaments. The CTCK domains of two polypeptides associate in the endoplasmic reticulum to generate intermolecularly disulfide-bonded dimers. These dimers progress to the Golgi apparatus, which is a more acidic environment than the endoplasmic reticulum. Under acidic conditions, the N-termini form non-covalent intermolecular interactions that juxtapose assemblies from different CTCK-linked dimers to produce long, disulfide-linked polymers that remain highly compact until secretion. In terms of processing, N-glycosylated. Complex glycosylation with bisecting N-acetylglucosamine. Contains mainly N-acetylglucosamine (3.1-8.5%), mannose (2.9-4.6%), a small amount of galactose (1.1-4.35) and sialic acid (0.3-1.3%). Most abundant glycan is composed of a GlcNAc(2)Man(3) core, a bisecting GlcNAc and another 3 GlcNAc antannae located on the mannoses of the core. Site Asn-1639 exists both in glycosylated and non-glycosylated forms.

The protein localises to the secreted. Ovomucin, the glycoprotein responsible for the gel properties of egg white, is composed for 2 subunits, alpha-ovomucin/MUC5B and beta-ovomucin/MUC6. This Gallus gallus (Chicken) protein is Mucin-5B (MUC5B).